The following is a 301-amino-acid chain: uncharacterized protein (301 aa).

The N-terminal stretch at 1–26 is a signal peptide; sequence MKGFSCSRPGYLTGLLLLAVAPILTA. Residue Cys-27 is the site of N-palmitoyl cysteine attachment. Cys-27 carries S-diacylglycerol cysteine lipidation. The TNase-like domain occupies 46 to 243; sequence KLKPATIEYW…YNAKINIWSH (198 aa). A disordered region spans residues 64-136; it reads NYASEERRKE…SKGDSTGDEK (73 aa). Composition is skewed to basic and acidic residues over residues 67–95 and 120–136; these read SEER…KTED and TPEK…GDEK.

The protein resides in the cell membrane. This is an uncharacterized protein from Mycoplasma pneumoniae (strain ATCC 29342 / M129 / Subtype 1) (Mycoplasmoides pneumoniae).